The following is a 267-amino-acid chain: Translation initiation factor 2 subunit alpha (267 aa).

The S1 motif domain occupies 17-88 (GEIVIGTVKR…KRGHIDLSIK (72 aa)).

This sequence belongs to the eIF-2-alpha family. As to quaternary structure, heterotrimer composed of an alpha, a beta and a gamma chain.

EIF-2 functions in the early steps of protein synthesis by forming a ternary complex with GTP and initiator tRNA. This Archaeoglobus fulgidus (strain ATCC 49558 / DSM 4304 / JCM 9628 / NBRC 100126 / VC-16) protein is Translation initiation factor 2 subunit alpha (eif2a).